The primary structure comprises 34 residues: Toxin GTx1-15 (34 aa).

3 disulfide bridges follow: Cys-2/Cys-17, Cys-9/Cys-23, and Cys-16/Cys-30. Phe-34 is subject to Phenylalanine amide.

It belongs to the neurotoxin 10 (Hwtx-1) family. 08 (Gtx1-15) subfamily. As to expression, expressed by the venom gland.

It localises to the secreted. Functionally, potent voltage-gated sodium channel blocker. Potently inhibits the voltage-gated sodium channels Nav1.7/SCN9A (IC(50)=0.58-10 nM). Also shows a moderate activity on Nav1.1/SCN1A (IC(50)=6 nM), Nav1.2/SCN2A (IC(50)=5-128 nM), Nav1.3/SCN3A (IC(50)=20.3-170 nM), and Nav1.6/SCN8A (IC(50)=17-20.1 nM). Shows an unclear inhibition of Nav1.4/SCN4A (IC(50)=200 nM to &gt;10 uM), Nav1.5/SCN5A (IC(50)=140 nM to &gt;10 uM) and Nav1.8/SCN10A (IC(50)=68-12200 nM). Weakly blocks the low voltage-gated calcium channels Cav3.1/CACNA1G (30% inhibition of the peak current at 9.8 nM). shows moderate affinity for lipid bilayers. In vivo, when tested on the OD1-induced mouse model of Nav1.7/SCN9A-mediated pain, the toxin is effective when co-administered with OD1, but lacks efficacy when delivered systemically. In Grammostola porteri (Tarantula spider), this protein is Toxin GTx1-15.